The sequence spans 374 residues: Succinyl-diaminopimelate desuccinylase (374 aa).

Histidine 66 serves as a coordination point for Zn(2+). Aspartate 68 is an active-site residue. Residue aspartate 99 coordinates Zn(2+). Glutamate 133 functions as the Proton acceptor in the catalytic mechanism. The Zn(2+) site is built by glutamate 134, glutamate 162, and histidine 348.

It belongs to the peptidase M20A family. DapE subfamily. In terms of assembly, homodimer. The cofactor is Zn(2+). It depends on Co(2+) as a cofactor.

It carries out the reaction N-succinyl-(2S,6S)-2,6-diaminopimelate + H2O = (2S,6S)-2,6-diaminopimelate + succinate. It participates in amino-acid biosynthesis; L-lysine biosynthesis via DAP pathway; LL-2,6-diaminopimelate from (S)-tetrahydrodipicolinate (succinylase route): step 3/3. In terms of biological role, catalyzes the hydrolysis of N-succinyl-L,L-diaminopimelic acid (SDAP), forming succinate and LL-2,6-diaminopimelate (DAP), an intermediate involved in the bacterial biosynthesis of lysine and meso-diaminopimelic acid, an essential component of bacterial cell walls. The polypeptide is Succinyl-diaminopimelate desuccinylase (Coxiella burnetii (strain CbuK_Q154) (Coxiella burnetii (strain Q154))).